The chain runs to 210 residues: Isochorismatase domain-containing protein 2 (210 aa).

Ser-7 carries the phosphoserine modification.

This sequence belongs to the isochorismatase family. In terms of assembly, interacts with CDKN2A.

It is found in the cytoplasm. The protein localises to the nucleus. This Rattus norvegicus (Rat) protein is Isochorismatase domain-containing protein 2 (Isoc2).